The primary structure comprises 386 residues: L-arabinitol 4-dehydrogenase (386 aa).

Zn(2+)-binding residues include cysteine 55, histidine 80, glutamate 81, cysteine 110, cysteine 113, cysteine 116, cysteine 124, and glutamate 165. Residues 192 to 193 (PI), aspartate 213, arginine 218, isoleucine 293, and 317 to 319 (QYR) each bind NAD(+).

It belongs to the zinc-containing alcohol dehydrogenase family. As to quaternary structure, homotetramer. It depends on Zn(2+) as a cofactor.

It carries out the reaction L-arabinitol + NAD(+) = L-xylulose + NADH + H(+). The protein operates within carbohydrate degradation; L-arabinose degradation via L-arabinitol; D-xylulose 5-phosphate from L-arabinose (fungal route): step 2/5. Functionally, catalyzes the NAD-dependent oxidation of L-arabinitol to L-xylulose in the fungal L-arabinose catabolic pathway. L-arabinose catabolism is important for using plant material as a carbon source. Not active with NADP as cosubstrate. This Aspergillus niger (strain ATCC MYA-4892 / CBS 513.88 / FGSC A1513) protein is L-arabinitol 4-dehydrogenase (ladA).